The sequence spans 314 residues: Olfactory receptor 5B12 (314 aa).

Topologically, residues 1 to 23 (MENNTEVTEFILVGLTDDPELQI) are extracellular. N3 carries N-linked (GlcNAc...) asparagine glycosylation. A helical membrane pass occupies residues 24 to 44 (PLFIVFLFIYLITLVGNLGMI). The Cytoplasmic portion of the chain corresponds to 45 to 52 (ELILLDSC). Residues 53–73 (LHTPMYFFLSNLSLVDFGYSS) form a helical membrane-spanning segment. Over 74-97 (AVTPKVMVGFLTGDKFILYNACAT) the chain is Extracellular. A disulfide bridge connects residues C95 and C187. A helical transmembrane segment spans residues 98 to 118 (QFFFFVAFITAESFLLASMAY). Topologically, residues 119 to 137 (DRYAALCKPLHYTTTMTTN) are cytoplasmic. The helical transmembrane segment at 138-158 (VCACLAIGSYICGFLNASIHT) threads the bilayer. At 159-194 (GNTFRLSFCRSNVVEHFFCDAPPLLTLSCSDNYISE) the chain is on the extracellular side. A helical membrane pass occupies residues 195–215 (MVIFFVVGFNDLFSILVILIS). Residues 216–235 (YLFIFITIMKMRSPEGRQKA) are Cytoplasmic-facing. A helical transmembrane segment spans residues 236 to 256 (FSTCASHLTAVSIFYGTGIFM). Topologically, residues 257–269 (YLRPNSSHFMGTD) are extracellular. N261 carries an N-linked (GlcNAc...) asparagine glycan. The helical transmembrane segment at 270–290 (KMASVFYAIVIPMLNPLVYSL) threads the bilayer. The Cytoplasmic portion of the chain corresponds to 291–314 (RNKEVKSAFKKTVGKAKASIGFIF).

This sequence belongs to the G-protein coupled receptor 1 family.

The protein resides in the cell membrane. Odorant receptor. The sequence is that of Olfactory receptor 5B12 (OR5B12) from Homo sapiens (Human).